An 84-amino-acid chain; its full sequence is Small ribosomal subunit protein uS17 (84 aa).

The protein belongs to the universal ribosomal protein uS17 family. As to quaternary structure, part of the 30S ribosomal subunit.

Functionally, one of the primary rRNA binding proteins, it binds specifically to the 5'-end of 16S ribosomal RNA. The polypeptide is Small ribosomal subunit protein uS17 (Legionella pneumophila (strain Paris)).